The chain runs to 377 residues: Hsc70-interacting protein 2 (377 aa).

Positions 68 to 123 (AKANEPANAPEDSEDEKSLSDPESDVELDMEGVIEADSDPAQPMGNYSKKATEEEV) are disordered. S80 is modified (phosphoserine). The span at 89 to 105 (PESDVELDMEGVIEADS) shows a compositional bias: acidic residues. 3 TPR repeats span residues 126–159 (ASEL…SPGN), 161–193 (LFHA…NSDL), and 195–227 (AGYK…DFDE). A coiled-coil region spans residues 239-276 (NAKKIEQHRLKQERRQAERKIKERQRDQRRARKEQEKH). A compositionally biased stretch (basic and acidic residues) spans 243–277 (IEQHRLKQERRQAERKIKERQRDQRRARKEQEKHN). 2 disordered regions span residues 243–302 (IEQH…DILG) and 344–377 (DVGA…DGLD). A compositionally biased stretch (gly residues) spans 282 to 293 (GSSGEFSGGNPG). The STI1 domain maps to 294-336 (NGNMSDILGAMSDPEVSAAIQDILSNPGNITKYASNPKIYNLI). Positions 355-369 (KAGKPSEPKPKKDSA) are enriched in basic and acidic residues.

The protein belongs to the FAM10 family. As to quaternary structure, homotetramer. Interacts with Hsc70 as well as DNAJ homologs and Hsp90.

Its subcellular location is the cytoplasm. In terms of biological role, one HIP oligomer binds the ATPase domains of at least two Hsc70 molecules dependent on activation of the Hsc70 ATPase by Hsp40. Stabilizes the ADP state of Hsc70 that has a high affinity for substrate protein. Through its own chaperone activity, it may contribute to the interaction of Hsc70 with various target proteins. The chain is Hsc70-interacting protein 2 from Drosophila melanogaster (Fruit fly).